A 539-amino-acid polypeptide reads, in one-letter code: D-mannonate oxidoreductase (539 aa).

39-50 (WVHFGGGNIFRG) contacts NAD(+).

This sequence belongs to the mannitol dehydrogenase family. UxuB subfamily.

It catalyses the reaction D-mannonate + NAD(+) = keto-D-fructuronate + NADH + H(+). It functions in the pathway carbohydrate metabolism. In terms of biological role, catalyzes the reduction of D-fructuronate (D-FruA) to D-mannonate (D-ManA). The sequence is that of D-mannonate oxidoreductase from Thermotoga maritima (strain ATCC 43589 / DSM 3109 / JCM 10099 / NBRC 100826 / MSB8).